A 127-amino-acid polypeptide reads, in one-letter code: Modulator protein MzrA (127 aa).

The Cytoplasmic segment spans residues 1 to 10 (MLKPRITARQ). A helical transmembrane segment spans residues 11-31 (LIWISAFLLMLTILMMTWSTL). At 32–127 (RQQESTLAIR…RLRESSHRFG (96 aa)) the chain is on the periplasmic side.

This sequence belongs to the MzrA family. Interacts with EnvZ.

Its subcellular location is the cell inner membrane. In terms of biological role, modulates the activity of the EnvZ/OmpR two-component regulatory system, probably by directly modulating EnvZ enzymatic activity and increasing stability of phosphorylated OmpR. This Salmonella agona (strain SL483) protein is Modulator protein MzrA.